The following is a 477-amino-acid chain: RTX-I toxin determinant D (477 aa).

Topologically, residues 1–59 are cytoplasmic; it reads MKTWLMGLYEFFQAYKTVWTEIWKIRHQLDTPDREKDENEFLPAHLELIETPVSKKPRL. The helical transmembrane segment at 60–80 threads the bilayer; sequence IAYLIMLFLFLALVISIVSHV. The Periplasmic segment spans residues 81 to 477; that stretch reads EIVATATGKL…ESVSESLRER (397 aa).

This sequence belongs to the membrane fusion protein (MFP) (TC 8.A.1) family.

It localises to the cell inner membrane. In terms of biological role, involved in the transport of the toxin RTX-I as well as that of RTX-II. This chain is RTX-I toxin determinant D (apxID), found in Actinobacillus pleuropneumoniae (Haemophilus pleuropneumoniae).